Here is a 1264-residue protein sequence, read N- to C-terminus: Kinesin-like protein KIN-14B (1264 aa).

Residues 1–10 show a composition bias toward polar residues; the sequence is MAEQKSTNMW. The tract at residues 1 to 52 is disordered; the sequence is MAEQKSTNMWNWEVTGFESKKSPSSEEGVHRTPSSMLRRYSIPKNSLPPHSS. A compositionally biased stretch (basic and acidic residues) spans 18–30; that stretch reads ESKKSPSSEEGVH. Residues 53–84 adopt a coiled-coil conformation; it reads ELASKVQSLKDKVQLAKDDYVGLRQEATDLQE. The 315-residue stretch at 138–452 folds into the Kinesin motor domain; it reads NVKVFCRARP…LNYAARARNT (315 aa). 219–226 provides a ligand contact to ATP; it reads GQTHAGKT. 3 coiled-coil regions span residues 462 to 511, 545 to 592, and 617 to 640; these read IKKW…YNEV, QLRN…LKSD, and TKKL…ENEK. Residues 588–615 are disordered; that stretch reads ALKSDMTRSRDPLEPQPRAAENTLDSSA. The span at 589–600 shows a compositional bias: basic and acidic residues; it reads LKSDMTRSRDPL. Residues 652-668 show a composition bias toward low complexity; that stretch reads SSTQVSSPSSKASPTVQ. Disordered stretches follow at residues 652–684 and 1117–1136; these read SSTQ…SVDK and PEQE…SISS.

Belongs to the TRAFAC class myosin-kinesin ATPase superfamily. Kinesin family. KIN-14 subfamily. Homodimer and heterodimer with KCA1. Interacts with CDKA-1. Interacts with At4g14310. In terms of tissue distribution, expressed in roots, leaves, stems and flowers.

The protein resides in the cell membrane. In terms of biological role, kinesin-like protein required for chloroplast movements and anchor to the plasma membrane. Mediates chloroplast movement via chloroplast actin (cp-actin) filaments. Required for the chloroplast avoidance response under high intensity blue light. Mediates redundantly with CHUP1 the nuclear avoidance response under high intensity blue light. May be involved in division plane determination. In Arabidopsis thaliana (Mouse-ear cress), this protein is Kinesin-like protein KIN-14B.